The primary structure comprises 272 residues: Acyl-[acyl-carrier-protein]--UDP-N-acetylglucosamine O-acyltransferase (272 aa).

The protein belongs to the transferase hexapeptide repeat family. LpxA subfamily. As to quaternary structure, homotrimer.

It localises to the cytoplasm. The catalysed reaction is a (3R)-hydroxyacyl-[ACP] + UDP-N-acetyl-alpha-D-glucosamine = a UDP-3-O-[(3R)-3-hydroxyacyl]-N-acetyl-alpha-D-glucosamine + holo-[ACP]. It functions in the pathway glycolipid biosynthesis; lipid IV(A) biosynthesis; lipid IV(A) from (3R)-3-hydroxytetradecanoyl-[acyl-carrier-protein] and UDP-N-acetyl-alpha-D-glucosamine: step 1/6. Its function is as follows. Involved in the biosynthesis of lipid A, a phosphorylated glycolipid that anchors the lipopolysaccharide to the outer membrane of the cell. In Rhizobium leguminosarum bv. trifolii (strain WSM2304), this protein is Acyl-[acyl-carrier-protein]--UDP-N-acetylglucosamine O-acyltransferase.